A 244-amino-acid polypeptide reads, in one-letter code: MSKLDLNALNDLPKVDRVLALAEPNAQLETLTAEERVAWALENLPGEYVLSSSFGIQAAVSLHLVNQIRPDIPVILTDTGYLFPETYQFIDELTDKLKLNLKVYRAGESPAWQEARYGKLWEQGVEGIEKYNEINKVEPMNRALKELKAQTWFAGLRREQSGSRAHLPVLAIQRGVFKVLPIIDWDNRTVYQYLQKHGLKYHPLWDQGYLSVGDTHTTRKWEPGMAEEETRFFGLKRECGLHEG.

The Nucleophile; cysteine thiosulfonate intermediate role is filled by cysteine 239.

This sequence belongs to the PAPS reductase family. CysH subfamily.

It is found in the cytoplasm. It carries out the reaction [thioredoxin]-disulfide + sulfite + adenosine 3',5'-bisphosphate + 2 H(+) = [thioredoxin]-dithiol + 3'-phosphoadenylyl sulfate. It functions in the pathway sulfur metabolism; hydrogen sulfide biosynthesis; sulfite from sulfate: step 3/3. Catalyzes the formation of sulfite from phosphoadenosine 5'-phosphosulfate (PAPS) using thioredoxin as an electron donor. The sequence is that of Phosphoadenosine 5'-phosphosulfate reductase from Salmonella agona (strain SL483).